Reading from the N-terminus, the 184-residue chain is Large ribosomal subunit protein uL5 (184 aa).

The protein belongs to the universal ribosomal protein uL5 family. In terms of assembly, part of the 50S ribosomal subunit; part of the 5S rRNA/L5/L18/L25 subcomplex. Contacts the 5S rRNA and the P site tRNA. Forms a bridge to the 30S subunit in the 70S ribosome.

This is one of the proteins that bind and probably mediate the attachment of the 5S RNA into the large ribosomal subunit, where it forms part of the central protuberance. In the 70S ribosome it contacts protein S13 of the 30S subunit (bridge B1b), connecting the 2 subunits; this bridge is implicated in subunit movement. Contacts the P site tRNA; the 5S rRNA and some of its associated proteins might help stabilize positioning of ribosome-bound tRNAs. The polypeptide is Large ribosomal subunit protein uL5 (Pelagibacter ubique (strain HTCC1062)).